Here is a 152-residue protein sequence, read N- to C-terminus: Small ribosomal subunit protein uS15 (152 aa).

The segment covering 1 to 11 has biased composition (basic residues); sequence MAKMHTKRKGK. Positions 1 to 22 are disordered; sequence MAKMHTKRKGKSSSTRPIRTEP.

The protein belongs to the universal ribosomal protein uS15 family. As to quaternary structure, part of the 30S ribosomal subunit.

The protein is Small ribosomal subunit protein uS15 of Methanosarcina barkeri (strain Fusaro / DSM 804).